Consider the following 269-residue polypeptide: Gap junction gamma-3 protein (269 aa).

Over 1–33 the chain is Extracellular; it reads MLLLELPIKCRMCGRFLRQLLAQESQHSTPVGR. Residues 34-54 traverse the membrane as a helical segment; sequence FLLPMLMGFRLLILVSSGPGV. The Cytoplasmic segment spans residues 55–86; that stretch reads FGNDENEFICHLGQPGCKTICYDVFRPLSPLR. The chain crosses the membrane as a helical span at residues 87-107; that stretch reads FWAFQVILMAVPSAIYVAFTL. The Extracellular portion of the chain corresponds to 108–145; it reads YHVIGYWEVPGKENKEQETQISKGDHSKDVSGAKSLKL. A helical membrane pass occupies residues 146-166; the sequence is LWAYVAHLGVRLALEGAALGV. The Cytoplasmic portion of the chain corresponds to 167–205; that stretch reads QYNLYGFKMSSTFICREDPCIGSTTCFQSHPSEKTIFLN. A helical transmembrane segment spans residues 206 to 226; it reads IMFGISGACFLFIFLELALLG. Topologically, residues 227 to 269 are extracellular; that stretch reads LGRFWRIYKHKLSFLKKLPTSESSVRSKDTTDELSVVEAKEPF. Ser261 is modified (phosphoserine).

This sequence belongs to the connexin family. Gamma-type subfamily. In terms of assembly, a connexon is composed of a hexamer of connexins. In terms of tissue distribution, CNS specific. Expression is restricted to brain, spinal cord, and sciatic nerve.

Its subcellular location is the cell membrane. The protein resides in the cell junction. It is found in the gap junction. Its function is as follows. One gap junction consists of a cluster of closely packed pairs of transmembrane channels, the connexons, through which materials of low MW diffuse from one cell to a neighboring cell. This is Gap junction gamma-3 protein (Gjc3) from Mus musculus (Mouse).